The primary structure comprises 131 residues: Small ribosomal subunit protein uS8 (131 aa).

This sequence belongs to the universal ribosomal protein uS8 family. As to quaternary structure, part of the 30S ribosomal subunit. Contacts proteins S5 and S12.

One of the primary rRNA binding proteins, it binds directly to 16S rRNA central domain where it helps coordinate assembly of the platform of the 30S subunit. This is Small ribosomal subunit protein uS8 from Hamiltonella defensa subsp. Acyrthosiphon pisum (strain 5AT).